We begin with the raw amino-acid sequence, 584 residues long: MDMIKPDFQQIRRDKFRVEQMNDFPNTWTQQQHQNIRIPNNLDLIGILQNQISVPVQTDLYQDSAATFMNMPQSIHRDPQGPSNWRISDLSQPSTVNHGYDQAGIRPNNVADLLSDHFSSRNQILDRPLYVGRDSIPQSSMIRRSEVSCLDDNQKGCVTVACSGTGNEILRSSYDQGSSSGSYRGEFSFLPSLENQSVAHNASNWNHGPVNVTATSHTNSKKGFPLSLLSDIPPSRDVGNAAVLSTMNIHGPLGPFTGYASILKSSRFLEPAQKMLEEFCISYASKIISRSESTSMEDDDDDDDNLSGFSSSSEPLEPKNRLKKAKLLFLQEEVCKWYKLYNHQLQTVMSSFNTVAGLNTATPYISLALKRTSRSFKALRTAIAEHVKQISSHSSNGNNNNRFQKRQRSLIGNNVGFESQQQHIWRPQRGLPERAVAVLRAWLFDHFLHPYPTDSDKQMLATQTGLSRNQVSNWFINARVRLWKPMVEEIHTLETKAIKNADTSHNIEPSNRPNTVSSPSHEQTLTGLSGTKRSRLEYMDMVGFNRGNVSLTLELRRGVDNVIQTQTQDHQFGTGSQMFHDFVG.

An SR/KY domain region spans residues 266-282 (SRFLEPAQKMLEEFCIS). The segment at 292–317 (ESTSMEDDDDDDDNLSGFSSSSEPLE) is disordered. Residues 295–305 (SMEDDDDDDDN) show a composition bias toward acidic residues. Residues 316-387 (LEPKNRLKKA…ALRTAIAEHV (72 aa)) are BELL domain. Positions 424–486 (IWRPQRGLPE…NARVRLWKPM (63 aa)) form a DNA-binding region, homeobox. The tract at residues 503–529 (TSHNIEPSNRPNTVSSPSHEQTLTGLS) is disordered.

This sequence belongs to the TALE/BELL homeobox family. As to quaternary structure, may form heterodimeric complex with the TALE/KNOX proteins STM and KNAT1/BP.

The protein resides in the nucleus. Required for specifying floral primordia and establishing early internode patterning events during inflorescence development. This is BEL1-like homeodomain protein 8 (BLH8) from Arabidopsis thaliana (Mouse-ear cress).